Here is a 326-residue protein sequence, read N- to C-terminus: Lipopolysaccharide heptosyltransferase 1 (326 aa).

Positions 187, 188, 192, 222, and 242 each coordinate ADP. Positions 187, 188, 192, 222, 242, 261, 262, 263, and 266 each coordinate ADP-L-glycero-beta-D-manno-heptose. The ADP site is built by Thr262 and Gly263.

Belongs to the glycosyltransferase 9 family. As to quaternary structure, monomer.

It is found in the cell inner membrane. It carries out the reaction an alpha-Kdo-(2-&gt;4)-alpha-Kdo-(2-&gt;6)-lipid A + ADP-L-glycero-beta-D-manno-heptose = an L-alpha-D-Hep-(1-&gt;5)-[alpha-Kdo-(2-&gt;4)]-alpha-Kdo-(2-&gt;6)-lipid A + ADP + H(+). The enzyme catalyses alpha-Kdo-(2-&gt;4)-alpha-Kdo-(2-&gt;6)-lipid A (E. coli) + ADP-L-glycero-beta-D-manno-heptose = L-alpha-D-Hep-(1-&gt;5)-[alpha-Kdo-(2-&gt;4)]-alpha-Kdo-(2-&gt;6)-lipid A (E. coli) + ADP + H(+). Its pathway is bacterial outer membrane biogenesis; LPS core biosynthesis. With respect to regulation, inhibited by ADP-L-glycero-beta-D-gluco-2-deoxy-2-fluoro-heptose (ADP-2F-heptose), a non-cleavable analog of the substrate ADP-L-glycero-beta-D-manno-heptose. Functionally, glycosyltransferase involved in the biosynthesis of the core oligosaccharide region of lipopolysaccharide (LPS). Catalyzes the addition of the first heptose unit to one 3-deoxy-D-manno-octulosonic acid (Kdo) residue of the Kdo2-lipid A module. This is Lipopolysaccharide heptosyltransferase 1 from Escherichia coli O18:K1:H7 (strain RS218 / NMEC).